Consider the following 359-residue polypeptide: Medium-wave-sensitive opsin 1 (359 aa).

Topologically, residues 1 to 47 are extracellular; the sequence is MAQRLTGEQTLDHYEDSTHASIFTYTNSNSTKGPFEGPNYHIAPRWV. Residues 12-38 form a required for 11-cis-retinal regeneration region; the sequence is DHYEDSTHASIFTYTNSNSTKGPFEGP. N-linked (GlcNAc...) asparagine glycosylation is present at asparagine 29. Residues 48–72 traverse the membrane as a helical segment; sequence YHLTSTWMILVVVASVFTNGLVLAA. At 73-84 the chain is on the cytoplasmic side; the sequence is TMRFKKLRHPLN. A helical transmembrane segment spans residues 85–110; that stretch reads WILVNLAVADLAETIIASTISVVNQI. The Extracellular segment spans residues 111–124; the sequence is YGYFVLGHPLCVIE. A disulfide bridge links cysteine 121 with cysteine 198. The helical transmembrane segment at 125–144 threads the bilayer; that stretch reads GYIVSLCGITGLWSLAIISW. The Cytoplasmic portion of the chain corresponds to 145–163; it reads ERWLVVCKPFGNVRFDAKL. A helical membrane pass occupies residues 164-187; it reads ATVGIVFSWVWAAIWTAPPIFGWS. At 188–213 the chain is on the extracellular side; sequence RYWPYGLKTSCGPDVFSGTSYPGVQS. The helical transmembrane segment at 214–241 threads the bilayer; the sequence is YMMVLMVTCCIFPLSIIVLCYLQVWLAI. Over 242–263 the chain is Cytoplasmic; the sequence is RAVAKQQKESESTQKAEKEVTR. The helical transmembrane segment at 264-287 threads the bilayer; that stretch reads MVVVMVFAYCLCWGPYTFFACFAT. At 288–295 the chain is on the extracellular side; sequence AHPGYAFH. A helical transmembrane segment spans residues 296-320; sequence PLVASLPSYFAKSATIYNPIIYVFM. Residue lysine 307 is modified to N6-(retinylidene)lysine. The Cytoplasmic segment spans residues 321–359; it reads NRQFRNCILHLFGKKVDDSSELSSTSKTEVSSVSSVSPA.

This sequence belongs to the G-protein coupled receptor 1 family. Opsin subfamily. In terms of assembly, monomer. Homodimer. Homotetramer. Post-translationally, N-glycosylated. O-glycosylated. In terms of processing, phosphorylated on some or all of the serine and threonine residues present in the C-terminal region. As to expression, expressed in retina (at protein level). Expressed in cone photoreceptor cells (at protein level).

The protein resides in the cell membrane. In terms of biological role, visual pigments are the light-absorbing molecules that mediate vision. They consist of an apoprotein, opsin, covalently linked to cis-retinal. May increase spectral sensitivity in dim light. This is Medium-wave-sensitive opsin 1 (Opn1mw) from Mus musculus (Mouse).